A 333-amino-acid polypeptide reads, in one-letter code: Terpene synthase 2 (333 aa).

Residues 82-87 (DDDLDT) carry the DDxx(x)D/E motif motif. The NDxxSxxxD/E motif motif lies at 219–227 (NDCVSYAKE).

The protein belongs to the terpene synthase family.

It carries out the reaction (2E,6E)-farnesyl diphosphate = (E)-beta-farnesene + diphosphate. It catalyses the reaction (2E,6E)-farnesyl diphosphate = (1S,2S,4R)-beta-elemene + diphosphate. Terpene synthase that converts its substrate farnesyl diphosphate (FPP) into the sesquiterpene (E)-beta-farnesene as major product. Is also able to convert FPP into delta-elemene, beta-elemene, (E)-beta-caryophyllene, 9-epi-(E)-caryophyllene, and a yet unidentified sesquiterpene. This is Terpene synthase 2 from Dictyostelium purpureum (Slime mold).